The sequence spans 277 residues: MIRNQANKPGRAKAATAARKSPLTKSAAKPAAASGAGAKLGKGVIAVALPSFRRERALLKQGIWPVAGCDEAGRGPLAGPVVAAAVILDPNRIPKGLDDSKRLSAEQREALFDKICKTSAFAVAYASPTRIDRDNILRASLWALSRAVRALPEAPKHVFVDGRDRIDVDCNCEAVIGGDGLVMSIAAASIVAKVTRDRLMCALAQDCPGYGFEQHKGYAVPEHLAALDRLGPSVHHRSLFAPVVAARRKHQPWTDVPEPDLFAEVTVVTSTEISLEA.

A disordered region spans residues 1-32; that stretch reads MIRNQANKPGRAKAATAARKSPLTKSAAKPAA. Residues 20-32 show a composition bias toward low complexity; it reads KSPLTKSAAKPAA. Residues 64 to 252 form the RNase H type-2 domain; that stretch reads WPVAGCDEAG…VVAARRKHQP (189 aa). Aspartate 70, glutamate 71, and aspartate 161 together coordinate a divalent metal cation.

This sequence belongs to the RNase HII family. Requires Mn(2+) as cofactor. It depends on Mg(2+) as a cofactor.

The protein resides in the cytoplasm. It catalyses the reaction Endonucleolytic cleavage to 5'-phosphomonoester.. In terms of biological role, endonuclease that specifically degrades the RNA of RNA-DNA hybrids. The polypeptide is Ribonuclease HII (Bradyrhizobium sp. (strain ORS 278)).